The sequence spans 307 residues: MSPFLSFSRATWSELRNSVPMTLSEEDLKALQGINENLTMQEAVEVYLPLSRLLNLYVQARQSRNSVLHQFLNNDEHAPPFVIGIAGSVAVGKSTTARVLCALLSRWENHPKVELVTTDGFLYPKKELDQRGIMHKKGFPESYDMKKLVQFVSDVKAGKPELEVPVYSHITYDITEEVKKVDRPDVLIIEGLNVLQSGMDYPHDPHRVFVSDFLDFSIYVDAESNTIEQWYVERFLKFRKGAFTQPGSYFSHYTQLSEQQAIEKAQQIWRDINGINLTENILPTKERAQLILRKGPNHLVEEILLRK.

87–94 (GSVAVGKS) is an ATP binding site.

Belongs to the prokaryotic pantothenate kinase family.

It is found in the cytoplasm. The enzyme catalyses (R)-pantothenate + ATP = (R)-4'-phosphopantothenate + ADP + H(+). Its pathway is cofactor biosynthesis; coenzyme A biosynthesis; CoA from (R)-pantothenate: step 1/5. This is Pantothenate kinase from Vibrio vulnificus (strain CMCP6).